The sequence spans 467 residues: GTPase Der (467 aa).

2 EngA-type G domains span residues 25-188 (PVVA…PEAP) and 199-372 (RRVA…ASWE). GTP-binding positions include 31–38 (GRPNVGKS), 78–82 (DTGGW), 140–143 (NKAD), 205–212 (GRPNVGKS), 252–256 (DTAGL), and 317–320 (NKWD). Positions 373-455 (TRVPTAQLNA…PIEISVRARK (83 aa)) constitute a KH-like domain.

The protein belongs to the TRAFAC class TrmE-Era-EngA-EngB-Septin-like GTPase superfamily. EngA (Der) GTPase family. In terms of assembly, associates with the 50S ribosomal subunit.

Functionally, GTPase that plays an essential role in the late steps of ribosome biogenesis. The chain is GTPase Der from Salinispora tropica (strain ATCC BAA-916 / DSM 44818 / JCM 13857 / NBRC 105044 / CNB-440).